The sequence spans 105 residues: Large ribosomal subunit protein uL24 (105 aa).

It belongs to the universal ribosomal protein uL24 family. As to quaternary structure, part of the 50S ribosomal subunit.

One of two assembly initiator proteins, it binds directly to the 5'-end of the 23S rRNA, where it nucleates assembly of the 50S subunit. In terms of biological role, one of the proteins that surrounds the polypeptide exit tunnel on the outside of the subunit. This Methylobacillus flagellatus (strain ATCC 51484 / DSM 6875 / VKM B-1610 / KT) protein is Large ribosomal subunit protein uL24.